The following is a 298-amino-acid chain: ATP synthase gamma chain (298 aa).

The protein belongs to the ATPase gamma chain family. As to quaternary structure, F-type ATPases have 2 components, CF(1) - the catalytic core - and CF(0) - the membrane proton channel. CF(1) has five subunits: alpha(3), beta(3), gamma(1), delta(1), epsilon(1). CF(0) has three main subunits: a, b and c.

The protein localises to the cell inner membrane. Produces ATP from ADP in the presence of a proton gradient across the membrane. The gamma chain is believed to be important in regulating ATPase activity and the flow of protons through the CF(0) complex. The sequence is that of ATP synthase gamma chain from Francisella tularensis subsp. holarctica (strain LVS).